The primary structure comprises 79 residues: UPF0654 protein C11D3.01c (79 aa).

Positions 1–79 (MPNPGNVIGG…RAQEELENLE (79 aa)) are disordered. Positions 22 to 45 (EETKQREKEYLEEHEGEVGEEHQK) are enriched in basic and acidic residues.

Belongs to the UPF0654 (con-6) family.

This chain is UPF0654 protein C11D3.01c, found in Schizosaccharomyces pombe (strain 972 / ATCC 24843) (Fission yeast).